Reading from the N-terminus, the 202-residue chain is Putative 5'(3')-deoxyribonucleotidase (202 aa).

Asp22 serves as the catalytic Nucleophile. Asp22, Asp24, and Asp156 together coordinate Mg(2+). The active-site Proton donor is Asp24.

The protein belongs to the 5'(3')-deoxyribonucleotidase family. Mg(2+) is required as a cofactor.

Its function is as follows. Dephosphorylates the 5' and 2'(3')-phosphates of deoxyribonucleotides. The polypeptide is Putative 5'(3')-deoxyribonucleotidase (Chlorobaculum tepidum (strain ATCC 49652 / DSM 12025 / NBRC 103806 / TLS) (Chlorobium tepidum)).